Here is a 41-residue protein sequence, read N- to C-terminus: Large ribosomal subunit protein bL36 (41 aa).

It belongs to the bacterial ribosomal protein bL36 family.

The protein is Large ribosomal subunit protein bL36 of Bartonella quintana (strain Toulouse) (Rochalimaea quintana).